Here is a 148-residue protein sequence, read N- to C-terminus: UPF0758 protein YeeS (148 aa).

An MPN domain is found at alanine 26–leucine 148. Histidine 97, histidine 99, and aspartate 110 together coordinate Zn(2+). Residues histidine 97 to aspartate 110 carry the JAMM motif motif.

The protein belongs to the UPF0758 family.

This is UPF0758 protein YeeS (yeeS) from Escherichia coli (strain K12).